The primary structure comprises 436 residues: UPF0597 protein YhaM (436 aa).

The protein belongs to the UPF0597 family.

In Escherichia coli O6:H1 (strain CFT073 / ATCC 700928 / UPEC), this protein is UPF0597 protein YhaM.